The following is a 542-amino-acid chain: Calcium-dependent protein kinase 15 (542 aa).

The segment at 1–73 (MGARASRHRQ…QAPQQAAAED (73 aa)) is disordered. G2 carries N-myristoyl glycine lipidation. Residues 12–21 (PDQSQSQSPS) show a composition bias toward low complexity. Residues 22–40 (PHHKHHHHHQTTRAPKPKP) are compositionally biased toward basic residues. The span at 41–60 (KPQPPPPQQPRSQPPPPPRH) shows a compositional bias: pro residues. Low complexity predominate over residues 61–71 (QPQQAPQQAAA). In terms of domain architecture, Protein kinase spans 90–348 (YTFGRELGRG…AAEILNHPWI (259 aa)). ATP-binding positions include 96–104 (LGRGQFGVT) and K119. D214 (proton acceptor) is an active-site residue. Residues 354 to 384 (APDKPLDITVISRMKQFRAMNKLKKVALKVV) are autoinhibitory domain. 4 consecutive EF-hand domains span residues 391 to 426 (EEIVGLKEMFKSLDTDNSGTITLEELRAGLPKLGTK), 427 to 462 (ISESELRQLMEAADVDGNGSIDYVEFISATMHMNRL), 463 to 497 (EKEDHIYKAFEYFDKDHSGFITVDELEEALTKYDM), and 498 to 533 (GDEATIKEIIAEVDTDHDGRINYQEFVAMMKNNSPE). The Ca(2+) site is built by D404, D406, S408, T410, E415, D440, D442, N444, S446, E451, D476, D478, S480, E487, D511, D513, D515, R517, and E522.

The protein belongs to the protein kinase superfamily. Ser/Thr protein kinase family. CDPK subfamily.

It is found in the membrane. It carries out the reaction L-seryl-[protein] + ATP = O-phospho-L-seryl-[protein] + ADP + H(+). The enzyme catalyses L-threonyl-[protein] + ATP = O-phospho-L-threonyl-[protein] + ADP + H(+). Activated by calcium. Autophosphorylation may play an important role in the regulation of the kinase activity. May play a role in signal transduction pathways that involve calcium as a second messenger. The protein is Calcium-dependent protein kinase 15 of Oryza sativa subsp. japonica (Rice).